The chain runs to 411 residues: Serine hydroxymethyltransferase (411 aa).

(6S)-5,6,7,8-tetrahydrofolate is bound by residues Leu-119 and Gly-123 to Leu-125. At Lys-228 the chain carries N6-(pyridoxal phosphate)lysine.

This sequence belongs to the SHMT family. Homodimer. The cofactor is pyridoxal 5'-phosphate.

The protein resides in the cytoplasm. It carries out the reaction (6R)-5,10-methylene-5,6,7,8-tetrahydrofolate + glycine + H2O = (6S)-5,6,7,8-tetrahydrofolate + L-serine. It functions in the pathway one-carbon metabolism; tetrahydrofolate interconversion. Its pathway is amino-acid biosynthesis; glycine biosynthesis; glycine from L-serine: step 1/1. In terms of biological role, catalyzes the reversible interconversion of serine and glycine with tetrahydrofolate (THF) serving as the one-carbon carrier. This reaction serves as the major source of one-carbon groups required for the biosynthesis of purines, thymidylate, methionine, and other important biomolecules. Also exhibits THF-independent aldolase activity toward beta-hydroxyamino acids, producing glycine and aldehydes, via a retro-aldol mechanism. The polypeptide is Serine hydroxymethyltransferase (Clostridium kluyveri (strain NBRC 12016)).